Consider the following 506-residue polypeptide: MKMKLTSLLLKFPEIKLKSFPSGKNPDSIEIEYIQSDSRKTNKNDIFCVADSIGSKKKEFISNAKASLILLRTDSNVLNDLLEVMNSSKIFLECEIDPEQLQGRIASFLLGHPSKDLDIVAVTGTNGKTSLTNILFSLAKDQGINCGLIGTIGVKFGDRVIDTGYTTPDASSLNLILKEMKEEGITTVFMEASSHGLKLGRMNGISVRAGVFTNLTQDHLDFHSDMEDYFESKFRLFEILDFSKSTFAVLDYSAPNGSKLYHKILNRFPDLLIYALDDIYRKWKISDISLNLQGTSYVLGLPGNQERKISTNLLGSFNVRNTALAFLTGIGIGLDLEKMSNSLEKIPQIPGRFQIIYSKDRSRMAVVDYAHTPDALENIIRSVRDSQPKCLITLFGCGGDRDRTKRPKMARIAEELSDQVILTSDNPRTEKPETILDEIQTGFSSGFIPLLREVDRAKAIVEGISCLPEGGCLLVAGKGHEEYQIIGKEKRHFSDVEEVQKAFGLF.

UDP-N-acetyl-alpha-D-muramoyl-L-alanyl-D-glutamate is bound at residue Ser38. Gly124–Ser130 contributes to the ATP binding site. UDP-N-acetyl-alpha-D-muramoyl-L-alanyl-D-glutamate contacts are provided by residues Thr166–Thr167, Ser193, and Arg201. Lys233 is modified (N6-carboxylysine). Meso-2,6-diaminopimelate contacts are provided by residues Arg401, Asp425–Arg428, Gly477, and Glu481. The short motif at Asp425 to Arg428 is the Meso-diaminopimelate recognition motif element.

The protein belongs to the MurCDEF family. MurE subfamily. Mg(2+) serves as cofactor. Post-translationally, carboxylation is probably crucial for Mg(2+) binding and, consequently, for the gamma-phosphate positioning of ATP.

It localises to the cytoplasm. The enzyme catalyses UDP-N-acetyl-alpha-D-muramoyl-L-alanyl-D-glutamate + meso-2,6-diaminopimelate + ATP = UDP-N-acetyl-alpha-D-muramoyl-L-alanyl-gamma-D-glutamyl-meso-2,6-diaminopimelate + ADP + phosphate + H(+). It participates in cell wall biogenesis; peptidoglycan biosynthesis. In terms of biological role, catalyzes the addition of meso-diaminopimelic acid to the nucleotide precursor UDP-N-acetylmuramoyl-L-alanyl-D-glutamate (UMAG) in the biosynthesis of bacterial cell-wall peptidoglycan. The polypeptide is UDP-N-acetylmuramoyl-L-alanyl-D-glutamate--2,6-diaminopimelate ligase (Leptospira interrogans serogroup Icterohaemorrhagiae serovar copenhageni (strain Fiocruz L1-130)).